The primary structure comprises 443 residues: uncharacterized protein (443 aa).

Positions 1–21 (MQSVTPPPTQQGKPDPTNSDM) are disordered. Residues 10–20 (QQGKPDPTNSD) show a composition bias toward polar residues.

This is an uncharacterized protein from Caenorhabditis elegans.